The primary structure comprises 562 residues: MSDIAGEARKIALQNAVSHGGRAREGAVLAGLLGARPELRPKAGELMEEISDIVAGINAMPESKQREELGDVPVERKKQEGQALPPLEGAIKGRVVTRFPPEPNGYPHIGHAKAAIINEEYVTMYGGIKILRMDDTNPGAERMEYYAAIKVGLDWLGIEYDVIKNTSDDMDLLLSKGRELLESGDAYVCTCKRDDMSKNRRAMAPCKCSKKAQEDHMEGWDKMHGKFKPGQAVARFRGDMESQNTVMRDPVLFRIMEERHPLLGDRHRVWPSYDMAVAIEDSIDGVTHAFRSKEYELRNELYGAILGKLDMRAPMVLEFSRLEFEGMPVSKRVIRPLIEDGKIPWYDDPRLPTLEGMKKRGITPGAIRRFVISLGLTKADTLAPFGALEAFNRKEIDGNSTRLFLVGDPRRIDVAGLPGTAELPNHPSGDMGSRKIETGGALYLPGKDAEGLSEGGHIRLMGLGDVRIDSAGRDLAGTYTGDDISAGYPKMQWVPCGDARKIKVVIPRAPIKDGEFDSSSLGILEGMVEPHYLQVGDGQSIQFVRFGYCRKESQHMAVFTHG.

Positions 101–111 match the 'HIGH' region motif; sequence PEPNGYPHIGH.

Belongs to the class-I aminoacyl-tRNA synthetase family. Glutamate--tRNA ligase type 2 subfamily.

The protein localises to the cytoplasm. It carries out the reaction tRNA(Glu) + L-glutamate + ATP = L-glutamyl-tRNA(Glu) + AMP + diphosphate. In terms of biological role, catalyzes the attachment of glutamate to tRNA(Glu) in a two-step reaction: glutamate is first activated by ATP to form Glu-AMP and then transferred to the acceptor end of tRNA(Glu). The protein is Glutamate--tRNA ligase of Cenarchaeum symbiosum (strain A).